A 389-amino-acid chain; its full sequence is MSDIAPAAHSPYIPPTPEVGLPLWLLAELTYRCPLQCPYCSNPLDFARQGQELTTEQWFKVMQEAREMGAAQIGFSGGEPLVRQDLAELIAEARRLGFYTNLITSGIGLTEEKIIAFKKAGLDHIQISFQASDEQVNNMLAGSKKAFAQKLEMAKAVKKHGYPMVLNFVTHRHNIDRIDKIIELCLALEADFVELATCQFYGWAHLNRVGLLPTKDQLVRAEAVTNEYRDQLAAQDHPCKLIFVTPDYYEERPKACMNGWGNIFLTVTPDGTALPCHGARQMPIQFPNVREHSMQHIWYDSFGFNRFRGYDWMPEPCRSCDEKEKDFGGCRCQAFMLTGDAANADPVCSKSYHHGIITQARDESETATQTIEELAFRNDRNSRLIAKSS.

Residues 19–234 (VGLPLWLLAE…TNEYRDQLAA (216 aa)) form the Radical SAM core domain. The [4Fe-4S] cluster site is built by Cys33, Cys37, and Cys40.

It belongs to the radical SAM superfamily. PqqE family. Interacts with PqqD. The interaction is necessary for activity of PqqE. It depends on [4Fe-4S] cluster as a cofactor.

The enzyme catalyses [PQQ precursor protein] + S-adenosyl-L-methionine = E-Y cross-linked-[PQQ precursor protein] + 5'-deoxyadenosine + L-methionine + H(+). Its pathway is cofactor biosynthesis; pyrroloquinoline quinone biosynthesis. Functionally, catalyzes the cross-linking of a glutamate residue and a tyrosine residue in the PqqA protein as part of the biosynthesis of pyrroloquinoline quinone (PQQ). The sequence is that of PqqA peptide cyclase from Pseudomonas syringae pv. tomato (strain ATCC BAA-871 / DC3000).